The following is a 319-amino-acid chain: HTH-type transcriptional regulator YidZ (319 aa).

The HTH lysR-type domain maps to 8–65 (LDLNLLLCLQLLMQERSVTKAAKRMNVTPSAVSKSLAKLRAWFDDPLFVNSPLGLSPT). Residues 25-44 (VTKAAKRMNVTPSAVSKSLA) constitute a DNA-binding region (H-T-H motif).

This sequence belongs to the LysR transcriptional regulatory family.

Functionally, involved in anaerobic NO protection. The protein is HTH-type transcriptional regulator YidZ of Escherichia coli O6:H1 (strain CFT073 / ATCC 700928 / UPEC).